Consider the following 778-residue polypeptide: Probable potassium transporter 13 (778 aa).

The Cytoplasmic segment spans residues 1 to 28 (MDVEGGGGGGGGAPPRGRNSWGWQKGTL). The helical transmembrane segment at 29-49 (LLAYQSFGVVYGDLCISPVYV) threads the bilayer. Topologically, residues 50-72 (YKNTFSGKLRLHEEDEEILGVLS) are extracellular. Residues 73-93 (LVFWSLTLIPLLKYIILVLGA) traverse the membrane as a helical segment. At 94–156 (DDNGEGGTFA…AFFEKHYSLR (63 aa)) the chain is on the cytoplasmic side. The chain crosses the membrane as a helical span at residues 157–177 (VVLLLFVLMGTSMVIGDGVLT). Over 178–199 (PTMSVLAAVSGLRIKFPELHEN) the chain is Extracellular. N-linked (GlcNAc...) asparagine glycosylation occurs at N199. A helical transmembrane segment spans residues 200-220 (YTVLLACVILIGLFALQHYGT). Residues 221–222 (RR) are Cytoplasmic-facing. A helical transmembrane segment spans residues 223 to 243 (VGFLFAPILISWLTCIGGIGI). The Extracellular segment spans residues 244–276 (YNIIKWNPSVIRALSPYYIYNFFRKAGKDGWSS). The chain crosses the membrane as a helical span at residues 277–297 (LGGIVLCLTGAEAMFADLGHF). Topologically, residues 298–303 (SKLSLR) are cytoplasmic. The chain crosses the membrane as a helical span at residues 304–324 (LGFTIVVYPCLVLAYMGEAAY). Topologically, residues 325-343 (LSKHREDLQSSFYKALPDR) are extracellular. The helical transmembrane segment at 344–364 (VFWPVLFIATLATAVGSQAII) threads the bilayer. Over 365–395 (SATFSIISQCRALGCFPRIKVVHTSSHVHGQ) the chain is Cytoplasmic. A helical membrane pass occupies residues 396-416 (IYIPEVNWVLMSLCLAVTIGF). At 417-424 (RDTEMIGN) the chain is on the extracellular side. A helical membrane pass occupies residues 425–445 (AYGLAVILVMCATTCLMFLVI). The Cytoplasmic portion of the chain corresponds to 446–451 (TTVWNR). A helical membrane pass occupies residues 452–472 (WVVWAAAFTVVFGSVELLYLS). The Extracellular portion of the chain corresponds to 473-477 (ACLAK). Residues 478–498 (VPHGGWLPLLLSLTTLLVMST) traverse the membrane as a helical segment. Residues 499–778 (WHYGTAMKQQ…LIEVGMAYRV (280 aa)) lie on the Cytoplasmic side of the membrane. A compositionally biased stretch (polar residues) spans 655–677 (PATSSSGGSNQHAFDAGTTTSSC). A disordered region spans residues 655 to 704 (PATSSSGGSNQHAFDAGTTTSSCEIDATAGGGGRRKVRFDNDGGGGGEEE).

Belongs to the HAK/KUP transporter (TC 2.A.72.3) family.

Its subcellular location is the membrane. Functionally, high-affinity potassium transporter. This chain is Probable potassium transporter 13 (HAK13), found in Oryza sativa subsp. japonica (Rice).